The following is a 284-amino-acid chain: Nucleotide-binding protein PputGB1_0956 (284 aa).

8–15 (GRSGSGKS) contributes to the ATP binding site. 60-63 (DARN) contributes to the GTP binding site.

This sequence belongs to the RapZ-like family.

Displays ATPase and GTPase activities. The polypeptide is Nucleotide-binding protein PputGB1_0956 (Pseudomonas putida (strain GB-1)).